Here is a 188-residue protein sequence, read N- to C-terminus: MKRSTRKQQGFTLLEMMLVVLLAGIAAGMVVMAFPPERQNDSAWQLARFQAQLEFAAESSQVNEYMLGVRIYPDRWQFYQLQRPAASERIPIPSGDRWQGYKWQPWQPHRVSASATLPEALRLELLQADGKKVDKTQSGDDPDILILPGGEITPFRLLVKSENKALSNWLQVDNTGRFVTSMSQGKKR.

Positions 1–10 are cleaved as a propeptide — leader sequence; it reads MKRSTRKQQG. Phenylalanine 11 is modified (N-methylphenylalanine). The chain crosses the membrane as a helical span at residues 13-35; that stretch reads LLEMMLVVLLAGIAAGMVVMAFP.

The protein belongs to the GSP H family. Type II secretion is composed of four main components: the outer membrane complex, the inner membrane complex, the cytoplasmic secretion ATPase and the periplasm-spanning pseudopilus. Interacts with core component OutG. Post-translationally, cleaved by prepilin peptidase. Methylated by prepilin peptidase at the amino group of the N-terminal phenylalanine once the leader sequence is cleaved by prepilin peptidase.

It localises to the cell inner membrane. In terms of biological role, component of the type II secretion system required for the energy-dependent secretion of extracellular factors such as proteases and toxins from the periplasm. Part of the pseudopilus tip complex that is critical for the recognition and binding of secretion substrates. The polypeptide is Type II secretion system protein H (outH) (Pectobacterium carotovorum subsp. carotovorum (Erwinia carotovora subsp. carotovora)).